The sequence spans 328 residues: N-acyl-aromatic-L-amino acid amidohydrolase (carboxylate-forming) A (328 aa).

Residues H30 and E33 each coordinate Zn(2+). Residues R74 and 81-82 each bind substrate; that span reads NR. Residue H127 coordinates Zn(2+). 2 residues coordinate substrate: E189 and Y300.

The protein belongs to the AspA/AstE family. Aspartoacylase subfamily. Homotetramer. Requires Zn(2+) as cofactor.

The protein resides in the apical cell membrane. Its subcellular location is the cytoplasm. The catalysed reaction is an N-acyl-aromatic L-alpha-amino acid + H2O = an aromatic L-alpha-amino acid + a carboxylate. It catalyses the reaction an N-acetyl-L-cysteine-S-conjugate + H2O = an S-substituted L-cysteine + acetate. Its function is as follows. Plays an important role in deacetylating mercapturic acids in kidney proximal tubules. The protein is N-acyl-aromatic-L-amino acid amidohydrolase (carboxylate-forming) A (acy3.1) of Danio rerio (Zebrafish).